Consider the following 109-residue polypeptide: Ribonuclease P protein component 2 (109 aa).

It belongs to the eukaryotic/archaeal RNase P protein component 2 family. Consists of a catalytic RNA component and at least 4-5 protein subunits.

The protein localises to the cytoplasm. The catalysed reaction is Endonucleolytic cleavage of RNA, removing 5'-extranucleotides from tRNA precursor.. In terms of biological role, part of ribonuclease P, a protein complex that generates mature tRNA molecules by cleaving their 5'-ends. The chain is Ribonuclease P protein component 2 from Archaeoglobus fulgidus (strain ATCC 49558 / DSM 4304 / JCM 9628 / NBRC 100126 / VC-16).